The sequence spans 201 residues: MANKGPSYGMSREVQSKIEKKYDEELEERLVEWIVVQCGPDVGRPDRGRLGFQVWLKNGVILSKLVNSLYPEGSKPVKVPENPPSMVFKQMEQVAQFLKAAEDYGVIKTDMFQTVDLYEGKDMAAVQRTLMALGSLAVTKNDGNYRGDPNWFMKKAQEHKRDFTDSQLQEGKHVIGLQMGSNRGASQAGMTGYGRPRQIIS.

A2 is subject to N-acetylalanine. The region spanning 24-137 (EELEERLVEW…RTLMALGSLA (114 aa)) is the Calponin-homology (CH) domain. S166 is modified (phosphoserine). An N6-acetyllysine modification is found at K172. The stretch at 175-200 (IGLQMGSNRGASQAGMTGYGRPRQII) is one Calponin-like repeat. Position 181 is a phosphoserine (S181). R183 carries the omega-N-methylarginine modification.

This sequence belongs to the calponin family.

The protein resides in the cytoplasm. Actin cross-linking/gelling protein. In Mus musculus (Mouse), this protein is Transgelin (Tagln).